Reading from the N-terminus, the 2080-residue chain is Fatty acid synthase beta subunit TOXC (2080 aa).

Residues 170-397 enclose the Starter acyltransferase (SAT) domain; it reads GRYFDELREL…LYRFNLLLRK (228 aa). Residue Ser-276 is the For acetyltransferase activity of the active site. The interval 585–830 is enoyl reductase (ER) domain; that stretch reads SRLLGLPPIM…VIVETEGLND (246 aa). Positions 1155–1644 are dehydratase (DH) domain; that stretch reads GKSRSWRHAI…LPNQKLEVKL (490 aa). In terms of domain architecture, MaoC-like spans 1544–1662; it reads SVDFEDPVSV…MIRLHIEARA (119 aa). Residues 1682–2046 form the Malonyl-CoA:ACP transacylase (MAT) domain; it reads TYVFTGQGSQ…FQYVYDLTGS (365 aa). Residues 1683-2046 are malonyl/palmitoyl transferase (MT/PT) domain; it reads YVFTGQGSQE…FQYVYDLTGS (364 aa). Catalysis depends on Ser-1828, which acts as the For malonyltransferase activity.

This sequence belongs to the fungal fatty acid synthetase subunit beta family.

The enzyme catalyses acetyl-CoA + n malonyl-CoA + 2n NADPH + 4n H(+) = a long-chain-acyl-CoA + n CoA + n CO2 + 2n NADP(+).. It carries out the reaction holo-[ACP] + acetyl-CoA = acetyl-[ACP] + CoA. It catalyses the reaction holo-[ACP] + malonyl-CoA = malonyl-[ACP] + CoA. The catalysed reaction is a (3R)-hydroxyacyl-[ACP] = a (2E)-enoyl-[ACP] + H2O. The enzyme catalyses a 2,3-saturated acyl-[ACP] + NAD(+) = a (2E)-enoyl-[ACP] + NADH + H(+). It carries out the reaction (9Z)-octadecenoyl-[ACP] + H2O = (9Z)-octadecenoate + holo-[ACP] + H(+). It functions in the pathway mycotoxin biosynthesis; HC-toxin biosynthesis. Fatty acid synthase beta subunit, part of the diffuse TOX2 gene cluster that mediates the biosynthesis of the HC-toxin, cyclic tetrapeptide of structure cyclo(D-Pro-L-Ala-D-Ala-L-Aeo), where Aeo stands for 2-amino-9,10-epoxi-8-oxodecanoic acid. HC-toxin is a determinant of specificity and virulence in the interaction between the producing fungus and its host, maize. TOXC contribute to the synthesis of the decanoic backbone of 2-amino-9,10-epoxi-8-oxodecanoic acid, an essential precursor for the production of the major forms of HC-toxin by the non-ribosomal peptide synthetase HTS1. This Cochliobolus carbonum (Maize leaf spot fungus) protein is Fatty acid synthase beta subunit TOXC.